The primary structure comprises 513 residues: Histidine ammonia-lyase (513 aa).

Positions 144 to 146 (ASG) form a cross-link, 5-imidazolinone (Ala-Gly). Ser-145 is subject to 2,3-didehydroalanine (Ser).

This sequence belongs to the PAL/histidase family. Contains an active site 4-methylidene-imidazol-5-one (MIO), which is formed autocatalytically by cyclization and dehydration of residues Ala-Ser-Gly.

The protein localises to the cytoplasm. The catalysed reaction is L-histidine = trans-urocanate + NH4(+). It functions in the pathway amino-acid degradation; L-histidine degradation into L-glutamate; N-formimidoyl-L-glutamate from L-histidine: step 1/3. In Streptococcus pyogenes serotype M18 (strain MGAS8232), this protein is Histidine ammonia-lyase.